The following is a 108-amino-acid chain: uncharacterized protein (108 aa).

A signal peptide spans 1–22 (MMIKQCVICLSLLVFGTTAAHA).

This is an uncharacterized protein from Bacillus subtilis (strain 168).